We begin with the raw amino-acid sequence, 372 residues long: NAD(P)H-quinone oxidoreductase subunit 1 (372 aa).

The next 8 membrane-spanning stretches (helical) occupy residues Ile-27–Val-47, Ile-97–Val-117, Val-128–Met-148, Leu-176–Val-196, Ile-204–Leu-224, Ile-266–Val-286, Ser-308–Leu-328, and Phe-347–Pro-367.

The protein belongs to the complex I subunit 1 family. In terms of assembly, NDH-1 is composed of at least 11 different subunits.

It is found in the cellular thylakoid membrane. The catalysed reaction is a plastoquinone + NADH + (n+1) H(+)(in) = a plastoquinol + NAD(+) + n H(+)(out). It catalyses the reaction a plastoquinone + NADPH + (n+1) H(+)(in) = a plastoquinol + NADP(+) + n H(+)(out). Its function is as follows. NDH-1 shuttles electrons from an unknown electron donor, via FMN and iron-sulfur (Fe-S) centers, to quinones in the respiratory and/or the photosynthetic chain. The immediate electron acceptor for the enzyme in this species is believed to be plastoquinone. Couples the redox reaction to proton translocation, and thus conserves the redox energy in a proton gradient. The sequence is that of NAD(P)H-quinone oxidoreductase subunit 1 from Prochlorococcus marinus (strain AS9601).